Here is a 145-residue protein sequence, read N- to C-terminus: 3-hydroxyacyl-[acyl-carrier-protein] dehydratase FabZ (145 aa).

H48 is a catalytic residue.

The protein belongs to the thioester dehydratase family. FabZ subfamily.

It is found in the cytoplasm. It catalyses the reaction a (3R)-hydroxyacyl-[ACP] = a (2E)-enoyl-[ACP] + H2O. Functionally, involved in unsaturated fatty acids biosynthesis. Catalyzes the dehydration of short chain beta-hydroxyacyl-ACPs and long chain saturated and unsaturated beta-hydroxyacyl-ACPs. This Saccharophagus degradans (strain 2-40 / ATCC 43961 / DSM 17024) protein is 3-hydroxyacyl-[acyl-carrier-protein] dehydratase FabZ.